Here is a 216-residue protein sequence, read N- to C-terminus: Ras-related protein RABA1c (216 aa).

Position 20 to 27 (20 to 27 (GDSGVGKS)) interacts with GTP. Positions 42-50 (SKSTIGVEF) match the Effector region motif. Residues 68-72 (DTAGQ), 126-129 (NKSD), and 156-157 (SA) contribute to the GTP site. S-geranylgeranyl cysteine attachment occurs at residues C213 and C214.

The protein belongs to the small GTPase superfamily. Rab family.

It localises to the cell membrane. Functionally, intracellular vesicle trafficking and protein transport. In Arabidopsis thaliana (Mouse-ear cress), this protein is Ras-related protein RABA1c (RABA1C).